Consider the following 775-residue polypeptide: Melanoma-associated antigen D1 (775 aa).

A disordered region spans residues 37–330 (SEAPPTSQAT…PARQTPSAWQ (294 aa)). The span at 39-50 (APPTSQATAAAS) shows a compositional bias: low complexity. 6 stretches are compositionally biased toward polar residues: residues 52–63 (PNASPQSSQPPT), 84–100 (KAQN…SQAR), 150–180 (GQNT…NQPK), 223–237 (AQTS…NVES), 250–260 (NNLNVEENSNG), and 297–330 (LAWQ…SAWQ). Repeat copies occupy residues 293 to 298 (WQTPLA), 299 to 304 (WQNPSG), 305 to 310 (WQNQTA), 329 to 334 (WQNPVA), 335 to 340 (WQNPVI), 341 to 346 (WPNPVI), 347 to 352 (WQNPVI), 353 to 358 (WPNPIV), 359 to 364 (WPGPIV), 365 to 370 (WPNPMA), 371 to 376 (WQSTPG), 377 to 382 (WQSPPS), 383 to 388 (WQAPPS), 389 to 394 (WQSPQD), 395 to 400 (WQGPPD), 401 to 406 (WQLPPD), 407 to 412 (WSMPPD), 413 to 418 (WSFPSD), and 419 to 424 (WPFPPD). The 22 X 6 AA tandem repeats of W-[PQ]-X-P-X-X stretch occupies residues 293 to 441 (WQTPLAWQNP…IPPDWQNLRP (149 aa)). Residues 374–407 (TPGWQSPPSWQAPPSWQSPQDWQGPPDWQLPPDW) form a disordered region. Over residues 375-406 (PGWQSPPSWQAPPSWQSPQDWQGPPDWQLPPD) the composition is skewed to low complexity. One copy of the 20; approximate repeat lies at 425 to 429 (WIPAD). A run of 2 repeats spans residues 430-435 (WPIPPD) and 436-441 (WQNLRP). Low complexity predominate over residues 437-452 (QNLRPSPNLRSSPNSR). The disordered stretch occupies residues 437–463 (QNLRPSPNLRSSPNSRASQNQGPPQPR). Residues 468 to 666 (LQERANKLVK…RDWTAQFMEA (199 aa)) form the MAGE domain.

As to quaternary structure, interacts with DLX5, DLX7 and MSX2 and forms homomultimers. Interacts with UNC5A. Interacts with TRIM28 and PJA1. Interacts with NGFR/p75NTR and RORA. Ubiquitous and in the seminiferous tubules expressed in Sertoli cells but not in germ cells. Expression decreases in all tissues with increased age and is detectable only in brain cortex and lung.

It localises to the cytoplasm. Its subcellular location is the cell membrane. The protein localises to the nucleus. Involved in the apoptotic response after nerve growth factor (NGF) binding in neuronal cells. Inhibits cell cycle progression, and facilitates NGFR-mediated apoptosis. May act as a regulator of the function of DLX family members. May enhance ubiquitin ligase activity of RING-type zinc finger-containing E3 ubiquitin-protein ligases. Proposed to act through recruitment and/or stabilization of the Ubl-conjugating enzyme (E2) at the E3:substrate complex. Plays a role in the circadian rhythm regulation. May act as RORA co-regulator, modulating the expression of core clock genes such as BMAL1 and NFIL3, induced, or NR1D1, repressed. The chain is Melanoma-associated antigen D1 (Maged1) from Rattus norvegicus (Rat).